Here is a 1413-residue protein sequence, read N- to C-terminus: DNA-directed RNA polymerase subunit beta' (1413 aa).

Residues Cys70, Cys72, Cys85, and Cys88 each coordinate Zn(2+). Mg(2+) contacts are provided by Asp460, Asp462, and Asp464. Residues Cys814, Cys888, Cys895, and Cys898 each coordinate Zn(2+).

Belongs to the RNA polymerase beta' chain family. The RNAP catalytic core consists of 2 alpha, 1 beta, 1 beta' and 1 omega subunit. When a sigma factor is associated with the core the holoenzyme is formed, which can initiate transcription. Mg(2+) is required as a cofactor. The cofactor is Zn(2+).

The catalysed reaction is RNA(n) + a ribonucleoside 5'-triphosphate = RNA(n+1) + diphosphate. In terms of biological role, DNA-dependent RNA polymerase catalyzes the transcription of DNA into RNA using the four ribonucleoside triphosphates as substrates. This Buchnera aphidicola subsp. Schizaphis graminum (strain Sg) protein is DNA-directed RNA polymerase subunit beta'.